We begin with the raw amino-acid sequence, 198 residues long: E3 ubiquitin-protein ligase rnf152 (198 aa).

Residues 12–55 (CQICFNYFSQRRLPKLLHCQHTCCSVCLSQMRLSQREIRCPWCR) form an RING-type zinc finger. A helical membrane pass occupies residues 162 to 182 (TGVCTVLLVAFILIFLLGIVL).

This sequence belongs to the RNF152 family.

The protein resides in the lysosome membrane. The catalysed reaction is S-ubiquitinyl-[E2 ubiquitin-conjugating enzyme]-L-cysteine + [acceptor protein]-L-lysine = [E2 ubiquitin-conjugating enzyme]-L-cysteine + N(6)-ubiquitinyl-[acceptor protein]-L-lysine.. It functions in the pathway protein modification; protein ubiquitination. Functionally, E3 ubiquitin-protein ligase that acts as a negative regulator of mTORC1 signaling by mediating ubiquitination of RagA/RRAGA and RHEB. Catalyzes 'Lys-63'-linked polyubiquitination of RagA/RRAGA in response to amino acid starvation, thereby regulating mTORC1 signaling. Also mediates monoubiquitination of RHEB, promoting its association with the TSC-TBC complex and subsequent inhibition. Also mediates 'Lys-48'-linked polyubiquitination of target proteins and their subsequent targeting to the proteasome for degradation. This Danio rerio (Zebrafish) protein is E3 ubiquitin-protein ligase rnf152.